A 447-amino-acid polypeptide reads, in one-letter code: Glycerol-3-phosphate acyltransferase ATS11, chloroplastic (447 aa).

The segment at 1 to 21 is disordered; it reads MFILSSSSSLPSPLSLSSSRV. A chloroplast-targeting transit peptide spans 1–48; the sequence is MFILSSSSSLPSPLSLSSSRVSLPPPSSSSLNLLPLSPHFQPPNLACS. Residues 217 to 222 carry the HXXXXD motif motif; the sequence is HQTEAD.

It belongs to the GPAT/DAPAT family.

The protein resides in the plastid. Its subcellular location is the chloroplast stroma. The enzyme catalyses a fatty acyl-[ACP] + sn-glycerol 3-phosphate = a 1-acyl-sn-glycero-3-phosphate + holo-[ACP]. It carries out the reaction sn-glycerol 3-phosphate + an acyl-CoA = a 1-acyl-sn-glycero-3-phosphate + CoA. It functions in the pathway phospholipid metabolism; CDP-diacylglycerol biosynthesis; CDP-diacylglycerol from sn-glycerol 3-phosphate: step 1/3. Functionally, esterifies the acyl-group from acyl-acyl carrier proteins (acyl-ACPs) to the sn-1 position of glycerol-3-phosphate. The physiological acyl donors in chloroplasts are acyl-ACPs, but acyl-CoAs are used as artificial donor for in vitro reactions. The enzyme from chilling-resistant plants discriminates against non-fluid palmitic acid and selects oleic acid whereas the enzyme from sensitive plants accepts both fatty acids. Squash is chilling-sensitive. Preferably utilizes oleoyl groups (18:1-ACP) and has lower affinity to palmitoyl (16:0-ACP) and stearoyl groups (18:0-ACP). The sequence is that of Glycerol-3-phosphate acyltransferase ATS11, chloroplastic from Cucurbita moschata (Winter crookneck squash).